Here is a 230-residue protein sequence, read N- to C-terminus: Uracil-DNA glycosylase (230 aa).

The active-site Proton acceptor is D70.

This sequence belongs to the uracil-DNA glycosylase (UDG) superfamily. UNG family.

It is found in the cytoplasm. The catalysed reaction is Hydrolyzes single-stranded DNA or mismatched double-stranded DNA and polynucleotides, releasing free uracil.. Its function is as follows. Excises uracil residues from the DNA which can arise as a result of misincorporation of dUMP residues by DNA polymerase or due to deamination of cytosine. The polypeptide is Uracil-DNA glycosylase (Pseudomonas putida (strain ATCC 700007 / DSM 6899 / JCM 31910 / BCRC 17059 / LMG 24140 / F1)).